The sequence spans 209 residues: Ribosome maturation factor RimM (209 aa).

The tract at residues methionine 1 to proline 28 is disordered. Residues glutamate 123–leucine 197 enclose the PRC barrel domain.

It belongs to the RimM family. As to quaternary structure, binds ribosomal protein uS19.

It localises to the cytoplasm. An accessory protein needed during the final step in the assembly of 30S ribosomal subunit, possibly for assembly of the head region. Essential for efficient processing of 16S rRNA. May be needed both before and after RbfA during the maturation of 16S rRNA. It has affinity for free ribosomal 30S subunits but not for 70S ribosomes. In Methylobacterium sp. (strain 4-46), this protein is Ribosome maturation factor RimM.